The chain runs to 464 residues: NADH dehydrogenase [ubiquinone] flavoprotein 1, mitochondrial (464 aa).

The N-terminal 20 residues, Met-1–Phe-20, are a transit peptide targeting the mitochondrion. At Lys-81 the chain carries N6-acetyllysine; alternate. Lys-81 is modified (N6-succinyllysine; alternate). Gly-87–Gly-96 serves as a coordination point for NADH. N6-acetyllysine is present on Lys-104. Arg-199–Thr-247 lines the FMN pocket. Omega-N-methylarginine is present on Arg-257. Lys-375 carries the post-translational modification N6-acetyllysine. [4Fe-4S] cluster is bound by residues Cys-379, Cys-382, Cys-385, and Cys-425.

Belongs to the complex I 51 kDa subunit family. Core subunit of respiratory chain NADH dehydrogenase (Complex I) which is composed of 45 different subunits. This is a component of the flavoprotein-sulfur (FP) fragment of the enzyme. Interacts with RAB5IF. FMN is required as a cofactor. Requires [4Fe-4S] cluster as cofactor.

It localises to the mitochondrion inner membrane. The enzyme catalyses a ubiquinone + NADH + 5 H(+)(in) = a ubiquinol + NAD(+) + 4 H(+)(out). Its function is as follows. Core subunit of the mitochondrial membrane respiratory chain NADH dehydrogenase (Complex I) which catalyzes electron transfer from NADH through the respiratory chain, using ubiquinone as an electron acceptor. Part of the peripheral arm of the enzyme, where the electrons from NADH are accepted by flavin mononucleotide (FMN) and then passed along a chain of iron-sulfur clusters by electron tunnelling to the final acceptor ubiquinone. Contains FMN, which is the initial electron acceptor as well as one iron-sulfur cluster. This Pongo pygmaeus (Bornean orangutan) protein is NADH dehydrogenase [ubiquinone] flavoprotein 1, mitochondrial.